The chain runs to 376 residues: MAERCQRIDEEVVASRDEISSLPDDLLIQILLLVPIKDAVGTMILSKRWRYVWTLLPKLEYSDPGDECESVWKFLEKLLELHKAPFLETLCIQLDVGKLVANAVDRFVRKLELELHWTAEPTSLPKSLYTCKTLVELTLSDKIIVDVPSSVCLPSLNILRLFYVVFKDENSLERLISSCSVLARSKVGLAISDNRDYRFAKVHKLRLEKPHIDVVCHTDDKFLKAISLVTYLVLPLEDPMALDFRGFTFTRLGKLVICPHGHLWLDIIPLILNNSPKLRFLAITSVMDIDPEISHCHGTNQGTVPRCLSAHLDEEFVWHGYRGNEEETQLIRYIFANAKCLKKREISTFHLEEREVIETVLKSMPRVSTTSTLVFK.

Positions 16-75 (RDEISSLPDDLLIQILLLVPIKDAVGTMILSKRWRYVWTLLPKLEYSDPGDECESVWKFL) constitute an F-box domain. 2 LRR repeats span residues 131-154 (CKTL…VCLP) and 199-224 (FAKV…KFLK). The 53-residue stretch at 296–348 (CHGTNQGTVPRCLSAHLDEEFVWHGYRGNEEETQLIRYIFANAKCLKKREIST) folds into the FBD domain.

This is Putative F-box/FBD/LRR-repeat protein At5g52460 (EDA41) from Arabidopsis thaliana (Mouse-ear cress).